Reading from the N-terminus, the 367-residue chain is Peptide chain release factor 2 (367 aa).

At Q254 the chain carries N5-methylglutamine.

This sequence belongs to the prokaryotic/mitochondrial release factor family. In terms of processing, methylated by PrmC. Methylation increases the termination efficiency of RF2.

The protein localises to the cytoplasm. Its function is as follows. Peptide chain release factor 2 directs the termination of translation in response to the peptide chain termination codons UGA and UAA. This Janthinobacterium sp. (strain Marseille) (Minibacterium massiliensis) protein is Peptide chain release factor 2.